The following is a 629-amino-acid chain: tRNA uridine 5-carboxymethylaminomethyl modification enzyme MnmG (629 aa).

FAD is bound by residues 13 to 18, valine 125, and serine 180; that span reads GGGHAG. An NAD(+)-binding site is contributed by 273-287; it reads GPRYCPSIEDKVMRF. Glutamine 370 contributes to the FAD binding site.

This sequence belongs to the MnmG family. In terms of assembly, homodimer. Heterotetramer of two MnmE and two MnmG subunits. It depends on FAD as a cofactor.

It is found in the cytoplasm. NAD-binding protein involved in the addition of a carboxymethylaminomethyl (cmnm) group at the wobble position (U34) of certain tRNAs, forming tRNA-cmnm(5)s(2)U34. This chain is tRNA uridine 5-carboxymethylaminomethyl modification enzyme MnmG, found in Escherichia coli O139:H28 (strain E24377A / ETEC).